The primary structure comprises 58 residues: uncharacterized protein (58 aa).

This is an uncharacterized protein from Yersinia enterocolitica.